The sequence spans 145 residues: 3-hydroxyacyl-[acyl-carrier-protein] dehydratase FabZ (145 aa).

H47 is a catalytic residue.

Belongs to the thioester dehydratase family. FabZ subfamily.

The protein localises to the cytoplasm. The catalysed reaction is a (3R)-hydroxyacyl-[ACP] = a (2E)-enoyl-[ACP] + H2O. Its function is as follows. Involved in unsaturated fatty acids biosynthesis. Catalyzes the dehydration of short chain beta-hydroxyacyl-ACPs and long chain saturated and unsaturated beta-hydroxyacyl-ACPs. The polypeptide is 3-hydroxyacyl-[acyl-carrier-protein] dehydratase FabZ (Acidovorax sp. (strain JS42)).